A 134-amino-acid polypeptide reads, in one-letter code: Ribosome-binding factor A (134 aa).

Belongs to the RbfA family. In terms of assembly, monomer. Binds 30S ribosomal subunits, but not 50S ribosomal subunits or 70S ribosomes.

It is found in the cytoplasm. One of several proteins that assist in the late maturation steps of the functional core of the 30S ribosomal subunit. Associates with free 30S ribosomal subunits (but not with 30S subunits that are part of 70S ribosomes or polysomes). Required for efficient processing of 16S rRNA. May interact with the 5'-terminal helix region of 16S rRNA. The sequence is that of Ribosome-binding factor A from Sinorhizobium medicae (strain WSM419) (Ensifer medicae).